The sequence spans 445 residues: MTKKYFGTDGIRGRVGEFPITPDFMLKLGWAAGMAFRSMGACRVLVGKDTRISGYMFESALEAGLSAAGADVMLLGPMPTPAIAYLTRTFHAEAGIVISASHNPHDDNGIKFFSGEGTKLPDEVELMIEELLDAPMTVVESSKLGKVSRINDASGRYIEFCKSSVPSSTSFAGLKVVLDCAHGATYKVAPSVFRELGAQVTVLSAQPNGLNINENCGSTHMSQLQAAVLAEHADLGIAFDGDGDRVLMVDQTGAIVDGDELLFIIARDLHERDKLQGGVVGTLMSNLGLELALADLGIPFVRANVGDRYVIAELLERNWLVGGENSGHIVCFRHATTGDAIIAALQVLMALKARGESLAQSRQGLRKCPQVLVNVRFGGGENPVEHPAVKEACERVTAAMAGRGRVLLRKSGTEPLVRVMVEGDDEAQVRAYAEELAKLVAEVSA.

The active-site Phosphoserine intermediate is S101. Mg(2+) is bound by residues S101, D240, D242, and D244. S101 is subject to Phosphoserine.

This sequence belongs to the phosphohexose mutase family. The cofactor is Mg(2+). In terms of processing, activated by phosphorylation.

The catalysed reaction is alpha-D-glucosamine 1-phosphate = D-glucosamine 6-phosphate. Functionally, catalyzes the conversion of glucosamine-6-phosphate to glucosamine-1-phosphate. This Pseudomonas fluorescens (strain ATCC BAA-477 / NRRL B-23932 / Pf-5) protein is Phosphoglucosamine mutase.